Consider the following 23-residue polypeptide: Basic phospholipase A2 CTs-G6 (23 aa).

Ca(2+) is required as a cofactor. Post-translationally, contains 7 disulfide bonds. In terms of tissue distribution, expressed by the venom gland.

The protein resides in the secreted. It catalyses the reaction a 1,2-diacyl-sn-glycero-3-phosphocholine + H2O = a 1-acyl-sn-glycero-3-phosphocholine + a fatty acid + H(+). Snake venom phospholipase A2 (PLA2) that induces local edema a few hours after injection (5-10 ug) in the hind paw. PLA2 catalyzes the calcium-dependent hydrolysis of the 2-acyl groups in 3-sn-phosphoglycerides. This Trimeresurus stejnegeri (Chinese green tree viper) protein is Basic phospholipase A2 CTs-G6.